The chain runs to 203 residues: Orotate phosphoribosyltransferase (203 aa).

5-phospho-alpha-D-ribose 1-diphosphate is bound by residues Arg94, Lys95, Lys98, His100, and 119–127; that span reads DDVATTGGS. Positions 123 and 151 each coordinate orotate.

Belongs to the purine/pyrimidine phosphoribosyltransferase family. PyrE subfamily. Homodimer. Requires Mg(2+) as cofactor.

It catalyses the reaction orotidine 5'-phosphate + diphosphate = orotate + 5-phospho-alpha-D-ribose 1-diphosphate. Its pathway is pyrimidine metabolism; UMP biosynthesis via de novo pathway; UMP from orotate: step 1/2. In terms of biological role, catalyzes the transfer of a ribosyl phosphate group from 5-phosphoribose 1-diphosphate to orotate, leading to the formation of orotidine monophosphate (OMP). The protein is Orotate phosphoribosyltransferase of Staphylothermus marinus (strain ATCC 43588 / DSM 3639 / JCM 9404 / F1).